A 113-amino-acid polypeptide reads, in one-letter code: U11-theraphotoxin-Hhn1a (113 aa).

The N-terminal stretch at 1–21 (MNTVRVTFLLVFVLAVSLGQA) is a signal peptide. The propeptide occupies 22–74 (DKDENRMEMQGKTEQGKSYLDFAENLLLQKLEELEAKLLEEDSEESRNSRQKR). 3 disulfides stabilise this stretch: Cys-75-Cys-90, Cys-82-Cys-95, and Cys-89-Cys-110.

It belongs to the neurotoxin 14 (magi-1) family. 01 (HNTX-16) subfamily. Expressed by the venom gland.

Its subcellular location is the secreted. Functionally, probable ion channel inhibitor. In Cyriopagopus hainanus (Chinese bird spider), this protein is U11-theraphotoxin-Hhn1a.